Reading from the N-terminus, the 388-residue chain is Lipid-A-disaccharide synthase (388 aa).

The protein belongs to the LpxB family.

The enzyme catalyses a lipid X + a UDP-2-N,3-O-bis[(3R)-3-hydroxyacyl]-alpha-D-glucosamine = a lipid A disaccharide + UDP + H(+). The protein operates within bacterial outer membrane biogenesis; LPS lipid A biosynthesis. Functionally, condensation of UDP-2,3-diacylglucosamine and 2,3-diacylglucosamine-1-phosphate to form lipid A disaccharide, a precursor of lipid A, a phosphorylated glycolipid that anchors the lipopolysaccharide to the outer membrane of the cell. This is Lipid-A-disaccharide synthase from Saccharophagus degradans (strain 2-40 / ATCC 43961 / DSM 17024).